The following is a 331-amino-acid chain: ADP-L-glycero-D-manno-heptose-6-epimerase (331 aa).

NADP(+)-binding positions include 11–12, 32–33, Lys-39, Lys-54, 75–79, and Asn-92; these read FI, DN, and EGACS. Catalysis depends on Tyr-139, which acts as the Proton acceptor. NADP(+) is bound at residue Lys-143. Asn-168 is a substrate binding site. NADP(+) contacts are provided by Val-169 and Lys-177. The active-site Proton acceptor is the Lys-177. Residues Arg-179, His-186, 200–203, Arg-213, and Tyr-292 each bind substrate; that span reads FGEY.

The protein belongs to the NAD(P)-dependent epimerase/dehydratase family. HldD subfamily. As to quaternary structure, homopentamer. It depends on NADP(+) as a cofactor.

It carries out the reaction ADP-D-glycero-beta-D-manno-heptose = ADP-L-glycero-beta-D-manno-heptose. It participates in nucleotide-sugar biosynthesis; ADP-L-glycero-beta-D-manno-heptose biosynthesis; ADP-L-glycero-beta-D-manno-heptose from D-glycero-beta-D-manno-heptose 7-phosphate: step 4/4. Catalyzes the interconversion between ADP-D-glycero-beta-D-manno-heptose and ADP-L-glycero-beta-D-manno-heptose via an epimerization at carbon 6 of the heptose. This Cupriavidus metallidurans (strain ATCC 43123 / DSM 2839 / NBRC 102507 / CH34) (Ralstonia metallidurans) protein is ADP-L-glycero-D-manno-heptose-6-epimerase.